The following is a 397-amino-acid chain: Phosphonopyruvate decarboxylase (397 aa).

This sequence belongs to the TPP enzyme family. The cofactor is thiamine diphosphate. Mg(2+) serves as cofactor.

The catalysed reaction is 3-phosphonopyruvate + H(+) = phosphonoacetaldehyde + CO2. Its pathway is secondary metabolite biosynthesis; bialaphos biosynthesis. Involved in the biosynthesis of phosphinothricin tripeptide (PTT), also known as bialaphos (BA), a natural-product antibiotic and potent herbicide. Catalyzes the decarboxylation of phosphonopyruvate (PnPy) to generate phosphonoacetaldehyde (PnAA). The polypeptide is Phosphonopyruvate decarboxylase (Streptomyces viridochromogenes (strain DSM 40736 / JCM 4977 / BCRC 1201 / Tue 494)).